The chain runs to 549 residues: MSRKVRAPRGTDLHCKGWQQEGPMRMLMNNLDPEVAEKPEELIVYGGSGKAARNWEAFDAIVKSLQELEDDETLLVQSGKPVGVFKTHSQAPRVLIANSLLVPSWADWDQFRELEKQGLTMYGQMTAGSWIYIGTQGILQGTYETFGAAADKHYNGDLSGKFVLTAGLGGMGGAQPLAVTMNNGVVLCVEVDRERIERRIDYQYLDKMAENLDEALELVDEAVSEKKPLSIGLLGNAASIYPELVKRGRIPDMVTDQTSAHDILNGYVPADLDFPYALELRHQDPEKYMKLSKSSIAKHVEAMLEFQKQGAIVFDYGNNIRQQAYIEGITKAFDFPGFVPAYIRPQFCEGKGPFRWVALSGDPEDIYRTDRLILEEFSDNEHLCRWIKMAGEQVSFQGLPSRICWLGYGERARFGKLINDLVAKGEIKAPIVIGRDHLDCGSVASPNRETEGMKDGSDAIADWPILNALINTAAGAHWVSVHHGGGVGIGYSLHAGIVVMADGSKDAEERLERVLTSDPGTGIIRHVDAGYELAKKTASEQGVNIPMWS.

Residues 46–47, Gln-124, 170–172, Glu-190, Arg-195, 236–237, 257–261, 267–268, and Tyr-316 each bind NAD(+); these read GG, GMG, NA, QTSAH, and YV. Cys-404 is a catalytic residue. Residue Gly-486 participates in NAD(+) binding.

This sequence belongs to the urocanase family. It depends on NAD(+) as a cofactor.

The protein resides in the cytoplasm. The catalysed reaction is 4-imidazolone-5-propanoate = trans-urocanate + H2O. It participates in amino-acid degradation; L-histidine degradation into L-glutamate; N-formimidoyl-L-glutamate from L-histidine: step 2/3. In terms of biological role, catalyzes the conversion of urocanate to 4-imidazolone-5-propionate. The sequence is that of Urocanate hydratase from Natranaerobius thermophilus (strain ATCC BAA-1301 / DSM 18059 / JW/NM-WN-LF).